A 93-amino-acid chain; its full sequence is uncharacterized protein (93 aa).

The helical transmembrane segment at 12–32 (VVGGLSFWTFSAGLIMIVNAL) threads the bilayer. The tract at residues 47–66 (TANANGSDDDNENKNNSYRS) is disordered.

The protein localises to the cell membrane. This is an uncharacterized protein from Mycoplasma genitalium (strain ATCC 33530 / DSM 19775 / NCTC 10195 / G37) (Mycoplasmoides genitalium).